The chain runs to 381 residues: Cytochrome b (381 aa).

A run of 4 helical transmembrane segments spans residues 34 to 54 (FGSLLGLCLIMQIITGLFLAM), 78 to 99 (WLMRNIHAYGASFFFICIYLHI), 114 to 134 (WNIGVVLLFLLMATAFVGYVL), and 179 to 199 (FFAFHFLLPFLILALSVIHIL). Residues histidine 84 and histidine 98 each coordinate heme b. Residues histidine 183 and histidine 197 each contribute to the heme b site. Histidine 202 provides a ligand contact to a ubiquinone. 4 helical membrane-spanning segments follow: residues 227–247 (YKDLFGFLIVITLLATLALFM), 289–309 (LGGVLALLFSIFILLLVPLLH), 321–341 (LTQIFFWSLVTNAIILTWIGG), and 348–368 (FIMVGQIASVAYFSLFLFVIP).

The protein belongs to the cytochrome b family. In terms of assembly, the cytochrome bc1 complex contains 3 respiratory subunits (MT-CYB, CYC1 and UQCRFS1), 2 core proteins (UQCRC1 and UQCRC2) and probably 6 low-molecular weight proteins. The cofactor is heme b.

The protein resides in the mitochondrion inner membrane. Its function is as follows. Component of the ubiquinol-cytochrome c reductase complex (complex III or cytochrome b-c1 complex) that is part of the mitochondrial respiratory chain. The b-c1 complex mediates electron transfer from ubiquinol to cytochrome c. Contributes to the generation of a proton gradient across the mitochondrial membrane that is then used for ATP synthesis. This Scyliorhinus canicula (Small-spotted catshark) protein is Cytochrome b (mt-cyb).